The sequence spans 381 residues: Probable envelope ADP,ATP carrier protein, chloroplastic (381 aa).

A chloroplast-targeting transit peptide spans 1–26 (MEEDRAILTFHRIPSLNSSLITTSSP). Helical transmembrane passes span 78–98 (LAIL…ALAG), 154–179 (LPQV…NLFK), 191–211 (LAAG…LDVL), 237–257 (IASF…YIAV), and 281–301 (LLTA…LDTV). Solcar repeat units follow at residues 85–177 (PKDA…YKNL), 185–268 (LSVI…VKKS), and 279–359 (SSLL…VKRL). Residue Arg-159 coordinates ADP. Position 302 (Arg-302) interacts with ADP. The helical transmembrane segment at 334–360 (GFLPNALKTLPNSSIRLTTFDMVKRLI) threads the bilayer.

Belongs to the mitochondrial carrier (TC 2.A.29) family.

The protein resides in the plastid. The protein localises to the chloroplast membrane. Transports adenine nucleotides. The chain is Probable envelope ADP,ATP carrier protein, chloroplastic (EAAC) from Arabidopsis thaliana (Mouse-ear cress).